The following is a 348-amino-acid chain: Trace amine-associated receptor 9 (348 aa).

Residues 1–33 (MTSDFSPEPPMELCYENVNGSCIKSSYAPWPRA) are Extracellular-facing. A glycan (N-linked (GlcNAc...) asparagine) is linked at Asn-19. 2 disulfides stabilise this stretch: Cys-22-Cys-186 and Cys-105-Cys-190. A helical transmembrane segment spans residues 34–58 (ILYGVLGLGALLAVFGNLLVIIAIL). At 59 to 68 (HFKQLHTPTN) the chain is on the cytoplasmic side. The helical transmembrane segment at 69-90 (FLVASLACADFLVGVTVMPFST) threads the bilayer. Residues 91 to 105 (VRSVESCWYFGESYC) lie on the Extracellular side of the membrane. The chain crosses the membrane as a helical span at residues 106–128 (KFHTCFDTSFCFASLFHLCCISI). Spermidine is bound by residues Asp-112 and Thr-113. Residues 129 to 148 (DRYIAVTDPLTYPTKFTVSV) are Cytoplasmic-facing. Residues 149-170 (SGLCIALSWFFSVTYSFSIFYT) traverse the membrane as a helical segment. At 171–196 (GANEEGIEELVVALTCVGGCQAPLNQ) the chain is on the extracellular side. The segment at 174 to 187 (EEGIEELVVALTCV) is extracellular Loop 2 (ECL2). The chain crosses the membrane as a helical span at residues 197–218 (NWVLLCFLLFFLPTVVMVFLYG). Over 219–256 (RIFLVAKYQARKIEGTANQAQASSESYKERVAKRERKA) the chain is Cytoplasmic. Residues 257–280 (AKTLGIAMAAFLVSWLPYIIDAVI) form a helical membrane-spanning segment. The Extracellular segment spans residues 281-293 (DAYMNFITPAYVY). Residues 294 to 314 (EILVWCVYYNSAMNPLIYAFF) traverse the membrane as a helical segment. Topologically, residues 315-348 (YPWFRKAIKLIVSGKVFRADSSTTNLFSEEAGAG) are cytoplasmic.

The protein belongs to the G-protein coupled receptor 1 family. In terms of tissue distribution, specifically expressed in neurons of the olfactory epithelium.

The protein localises to the cell membrane. In terms of biological role, olfactory receptor specific for trace amines, such as triethylamine, N,N-dimethylcyclohexylamine (DMCHA), beta-phenylethylamine (beta-PEA), cadaverine (CAD) and polyamines such as spermine and spermidine. Trace amine compounds are enriched in animal body fluids and act on trace amine-associated receptors (TAARs) to elicit both intraspecific and interspecific innate behaviors. Trace amine-binding causes a conformation change that triggers signaling via G(s)-class of G alpha proteins (GNAL or GNAS). In mature olfactory sensory neurons, Taar9 is coupled with GNAL/G(olf)G alpha protein and mediates activation of adenylate cyclase activity to activate cAMP signaling and eventually transmit odorant signals to achieve membrane depolarization. In immature olfactory sensory neurons, Taar9 is coupled with GNAS/G(s) G alpha proteins. The protein is Trace amine-associated receptor 9 of Mus musculus (Mouse).